Consider the following 391-residue polypeptide: Saxitoxin and tetrodotoxin-binding protein 1 (391 aa).

The N-terminal stretch at 1–20 (MGAVPGVVLLLMLAVLGIRA) is a signal peptide. 2 consecutive repeat copies span residues 24–202 (PEEC…HKKS) and 203–391 (PEEC…PEQD). 7 N-linked (GlcNAc...) asparagine glycosylation sites follow: N54, N63, N97, N234, N268, N277, and N307.

In terms of assembly, homodimer or heterodimer of PSTBP1 and PSTBP2. In terms of processing, glycosylated.

Its subcellular location is the secreted. Its function is as follows. Binds both saxitoxin and tetradotoxin. May play a role in toxin accumulation and/or excretion. This Takifugu pardalis (Panther puffer) protein is Saxitoxin and tetrodotoxin-binding protein 1 (psbp1).